A 143-amino-acid chain; its full sequence is Small ribosomal subunit protein uS12 (143 aa).

The segment covering 1–20 has biased composition (basic residues); it reads MGKCRGLRTARKLRSHRRDQ. A disordered region spans residues 1–26; it reads MGKCRGLRTARKLRSHRRDQKWHDKQ. A Glycyl lysine isopeptide (Lys-Gly) (interchain with G-Cter in SUMO2) cross-link involves residue Lys37. Residue Lys54 is modified to N6-succinyllysine. The residue at position 62 (Pro62) is a 3-hydroxyproline. Lys135 is subject to N6-acetyllysine.

This sequence belongs to the universal ribosomal protein uS12 family. As to quaternary structure, component of the 40S small ribosomal subunit. Part of the small subunit (SSU) processome, composed of more than 70 proteins and the RNA chaperone small nucleolar RNA (snoRNA) U3. In terms of processing, hydroxylation at Pro-62 affects translation termination efficiency.

Its subcellular location is the cytoplasm. The protein resides in the cytosol. It localises to the rough endoplasmic reticulum. The protein localises to the nucleus. It is found in the nucleolus. Component of the ribosome, a large ribonucleoprotein complex responsible for the synthesis of proteins in the cell. The small ribosomal subunit (SSU) binds messenger RNAs (mRNAs) and translates the encoded message by selecting cognate aminoacyl-transfer RNA (tRNA) molecules. The large subunit (LSU) contains the ribosomal catalytic site termed the peptidyl transferase center (PTC), which catalyzes the formation of peptide bonds, thereby polymerizing the amino acids delivered by tRNAs into a polypeptide chain. The nascent polypeptides leave the ribosome through a tunnel in the LSU and interact with protein factors that function in enzymatic processing, targeting, and the membrane insertion of nascent chains at the exit of the ribosomal tunnel. Plays an important role in translational accuracy. Part of the small subunit (SSU) processome, first precursor of the small eukaryotic ribosomal subunit. During the assembly of the SSU processome in the nucleolus, many ribosome biogenesis factors, an RNA chaperone and ribosomal proteins associate with the nascent pre-rRNA and work in concert to generate RNA folding, modifications, rearrangements and cleavage as well as targeted degradation of pre-ribosomal RNA by the RNA exosome. This Bos taurus (Bovine) protein is Small ribosomal subunit protein uS12 (RPS23).